A 575-amino-acid polypeptide reads, in one-letter code: uncharacterized protein (575 aa).

The protein localises to the cytoplasm. It is found in the cytoskeleton. Its subcellular location is the microtubule organizing center. It localises to the spindle pole body. This is an uncharacterized protein from Schizosaccharomyces pombe (strain 972 / ATCC 24843) (Fission yeast).